The sequence spans 327 residues: Phenylalanine--tRNA ligase alpha subunit (327 aa).

Position 252 (E252) interacts with Mg(2+).

It belongs to the class-II aminoacyl-tRNA synthetase family. Phe-tRNA synthetase alpha subunit type 1 subfamily. As to quaternary structure, tetramer of two alpha and two beta subunits. Requires Mg(2+) as cofactor.

Its subcellular location is the cytoplasm. The enzyme catalyses tRNA(Phe) + L-phenylalanine + ATP = L-phenylalanyl-tRNA(Phe) + AMP + diphosphate + H(+). The sequence is that of Phenylalanine--tRNA ligase alpha subunit from Erwinia tasmaniensis (strain DSM 17950 / CFBP 7177 / CIP 109463 / NCPPB 4357 / Et1/99).